The following is a 124-amino-acid chain: MRHYEVLFILKPTLTEEEVSAKLEFVKEVLTKNGAEIESVVPMGTRKLAYKIKKYERGTYFVIYFKAPTNLIAELERVLRITEEVIRFLIVKYENKKEIAAWEKLSKGIKQNKKEIKASESTEG.

The protein belongs to the bacterial ribosomal protein bS6 family.

In terms of biological role, binds together with bS18 to 16S ribosomal RNA. The chain is Small ribosomal subunit protein bS6 from Campylobacter lari (strain RM2100 / D67 / ATCC BAA-1060).